The sequence spans 321 residues: Biotin synthase (321 aa).

In terms of domain architecture, Radical SAM core spans 37–264; sequence RDMELCTLSS…TSVIRLSAGR (228 aa). Residues Cys-52, Cys-56, and Cys-59 each contribute to the [4Fe-4S] cluster site. Cys-96, Cys-127, Cys-187, and Arg-259 together coordinate [2Fe-2S] cluster.

Belongs to the radical SAM superfamily. Biotin synthase family. In terms of assembly, homodimer. [4Fe-4S] cluster serves as cofactor. It depends on [2Fe-2S] cluster as a cofactor.

The catalysed reaction is (4R,5S)-dethiobiotin + (sulfur carrier)-SH + 2 reduced [2Fe-2S]-[ferredoxin] + 2 S-adenosyl-L-methionine = (sulfur carrier)-H + biotin + 2 5'-deoxyadenosine + 2 L-methionine + 2 oxidized [2Fe-2S]-[ferredoxin]. It functions in the pathway cofactor biosynthesis; biotin biosynthesis; biotin from 7,8-diaminononanoate: step 2/2. Functionally, catalyzes the conversion of dethiobiotin (DTB) to biotin by the insertion of a sulfur atom into dethiobiotin via a radical-based mechanism. The polypeptide is Biotin synthase (Coxiella burnetii (strain CbuK_Q154) (Coxiella burnetii (strain Q154))).